A 276-amino-acid polypeptide reads, in one-letter code: MAIKKYKPTSAGVRGMSVLSFDEITKTTPEKSLTVSLNKSGGRNSYGRVTIRHRGGGAKRKYRIIDFKRNKDGIKAVVKSIEYDPNRTANIALLQYEDGEKRYIIQPVGLKVGDVVESGADVDIVPGNALPLRNIPVGTTVHNIEMKVGKGAQLVRTAGAEAQLMAKEGKFAQLRLPSGEFRLIHLDCKATVGQVGNISHELVTIGKAGRNRHLGKRPYVRGSAMNPVDHPHGGGEGRAPIGRPAPSTPWGKPALGLKTRKKNKKSNKYIVRRRKK.

Residues 218-276 form a disordered region; sequence PYVRGSAMNPVDHPHGGGEGRAPIGRPAPSTPWGKPALGLKTRKKNKKSNKYIVRRRKK. Residues 258–276 are compositionally biased toward basic residues; the sequence is KTRKKNKKSNKYIVRRRKK.

It belongs to the universal ribosomal protein uL2 family. In terms of assembly, part of the 50S ribosomal subunit. Forms a bridge to the 30S subunit in the 70S ribosome.

In terms of biological role, one of the primary rRNA binding proteins. Required for association of the 30S and 50S subunits to form the 70S ribosome, for tRNA binding and peptide bond formation. It has been suggested to have peptidyltransferase activity; this is somewhat controversial. Makes several contacts with the 16S rRNA in the 70S ribosome. In Finegoldia magna (strain ATCC 29328 / DSM 20472 / WAL 2508) (Peptostreptococcus magnus), this protein is Large ribosomal subunit protein uL2.